We begin with the raw amino-acid sequence, 231 residues long: 7-cyano-7-deazaguanine synthase (231 aa).

11 to 21 (LSGGLDSATTM) contributes to the ATP binding site. Zn(2+) is bound by residues Cys195, Cys205, Cys208, and Cys211.

This sequence belongs to the QueC family. It depends on Zn(2+) as a cofactor.

The catalysed reaction is 7-carboxy-7-deazaguanine + NH4(+) + ATP = 7-cyano-7-deazaguanine + ADP + phosphate + H2O + H(+). It participates in purine metabolism; 7-cyano-7-deazaguanine biosynthesis. Catalyzes the ATP-dependent conversion of 7-carboxy-7-deazaguanine (CDG) to 7-cyano-7-deazaguanine (preQ(0)). The chain is 7-cyano-7-deazaguanine synthase from Syntrophus aciditrophicus (strain SB).